The chain runs to 260 residues: Hemin import ATP-binding protein HmuV (260 aa).

The ABC transporter domain maps to 6–242 (LHADNLHYRA…VQLRACYQAD (237 aa)). Residue 38-45 (GPNGAGKS) coordinates ATP.

Belongs to the ABC transporter superfamily. Heme (hemin) importer (TC 3.A.1.14.5) family. In terms of assembly, the complex is composed of two ATP-binding proteins (HmuV), two transmembrane proteins (HmuU) and a solute-binding protein (HmuT).

The protein localises to the cell inner membrane. Part of the ABC transporter complex HmuTUV involved in hemin import. Responsible for energy coupling to the transport system. This Sodalis glossinidius (strain morsitans) protein is Hemin import ATP-binding protein HmuV.